The primary structure comprises 455 residues: Ribulose bisphosphate carboxylase large chain (455 aa).

K5 carries the post-translational modification N6,N6,N6-trimethyllysine. The substrate site is built by N114 and T164. The active-site Proton acceptor is K166. K168 provides a ligand contact to substrate. Mg(2+) is bound by residues K192, D194, and E195. Residue K192 is modified to N6-carboxylysine. H285 functions as the Proton acceptor in the catalytic mechanism. The substrate site is built by R286, H318, and S370.

It belongs to the RuBisCO large chain family. Type I subfamily. In terms of assembly, heterohexadecamer of 8 large chains and 8 small chains; disulfide-linked. The disulfide link is formed within the large subunit homodimers. Mg(2+) serves as cofactor. The disulfide bond which can form in the large chain dimeric partners within the hexadecamer appears to be associated with oxidative stress and protein turnover.

It is found in the plastid. Its subcellular location is the chloroplast. The enzyme catalyses 2 (2R)-3-phosphoglycerate + 2 H(+) = D-ribulose 1,5-bisphosphate + CO2 + H2O. It catalyses the reaction D-ribulose 1,5-bisphosphate + O2 = 2-phosphoglycolate + (2R)-3-phosphoglycerate + 2 H(+). Its function is as follows. RuBisCO catalyzes two reactions: the carboxylation of D-ribulose 1,5-bisphosphate, the primary event in carbon dioxide fixation, as well as the oxidative fragmentation of the pentose substrate in the photorespiration process. Both reactions occur simultaneously and in competition at the same active site. The chain is Ribulose bisphosphate carboxylase large chain from Lupinus paraguariensis (Lupine).